A 294-amino-acid chain; its full sequence is 33 kDa chaperonin (294 aa).

2 disulfides stabilise this stretch: Cys237/Cys239 and Cys270/Cys273.

This sequence belongs to the HSP33 family. Post-translationally, under oxidizing conditions two disulfide bonds are formed involving the reactive cysteines. Under reducing conditions zinc is bound to the reactive cysteines and the protein is inactive.

It localises to the cytoplasm. Its function is as follows. Redox regulated molecular chaperone. Protects both thermally unfolding and oxidatively damaged proteins from irreversible aggregation. Plays an important role in the bacterial defense system toward oxidative stress. The sequence is that of 33 kDa chaperonin from Geobacillus kaustophilus (strain HTA426).